Consider the following 201-residue polypeptide: Probable GTP-binding protein EngB (201 aa).

One can recognise an EngB-type G domain in the interval 22–195 (SLPEIAFCGR…MEQLEMILKY (174 aa)). GTP-binding positions include 30 to 37 (GRSNVGKS), 57 to 61 (GKTRT), 75 to 78 (DLPG), 142 to 145 (TKLD), and 174 to 176 (YSS). Positions 37 and 59 each coordinate Mg(2+).

Belongs to the TRAFAC class TrmE-Era-EngA-EngB-Septin-like GTPase superfamily. EngB GTPase family. Requires Mg(2+) as cofactor.

Necessary for normal cell division and for the maintenance of normal septation. This is Probable GTP-binding protein EngB from Finegoldia magna (strain ATCC 29328 / DSM 20472 / WAL 2508) (Peptostreptococcus magnus).